A 506-amino-acid polypeptide reads, in one-letter code: MPDTAPQLRLYNMLTRTKEAFAPIDAKNVRMYVCGPTVYDFAHIGNARPVIVFDVLFRLLRHVYGAQHVTYARNITDVDDKINARAARDYPDLPFNEAIRKVTESTNAQFQADVTALGNLQPTVQPRATEHMDEMRAMIDRLVQRGVAYVAQDHVLFSPSAMNARKGPRYGALARRSLDEMLAGARVDVASYKRDEMDFVLWKPSKKGEPGWPSPAGIETLGRPGWHIECSAMSMAKLLEPFGGGLKCDDPERNQFDIHGGGIDLVFPHHENEIAQSCCALGTERMANIWMHNGFLQVEGQKMSKSLGNFITIRDVLNDGLPQLGEWGDNTVRDRWAGLAARLSMLQTHYREPINWTAQRLAESADELHRWYGLLRDEGFGAPEKLSHASAVAAALCDDLNSWAAITALRQAFKVRDVAALGEGMALMGLLDPYFVTASDVPIFARADVDASAIAARIAERLNFINAKNWAEADRIRDELLQEGVQLKDSKDPATGERITTWDVVG.

A Zn(2+)-binding site is contributed by cysteine 34. A 'HIGH' region motif is present at residues 36–46; it reads PTVYDFAHIGN. The Zn(2+) site is built by cysteine 230, histidine 269, and glutamate 273. A 'KMSKS' region motif is present at residues 302–306; sequence KMSKS. Residue lysine 305 coordinates ATP.

This sequence belongs to the class-I aminoacyl-tRNA synthetase family. As to quaternary structure, monomer. Requires Zn(2+) as cofactor.

It is found in the cytoplasm. The enzyme catalyses tRNA(Cys) + L-cysteine + ATP = L-cysteinyl-tRNA(Cys) + AMP + diphosphate. This chain is Cysteine--tRNA ligase, found in Brucella suis (strain ATCC 23445 / NCTC 10510).